A 396-amino-acid polypeptide reads, in one-letter code: Squamosa promoter-binding-like protein 10 (396 aa).

The disordered stretch occupies residues 74 to 104 (QSTSINSSSPEDKRCNLASQSSPGDSSSNID). Residues 90–104 (LASQSSPGDSSSNID) show a composition bias toward polar residues. Residues 173–250 (VPRCQIDGCE…SHHNARRRKP (78 aa)) form an SBP-type zinc finger. The Zn(2+) site is built by Cys-176, Cys-181, Cys-198, His-201, Cys-217, Cys-220, His-224, and Cys-236. The short motif at 233-249 (KRSCRKRLSHHNARRRK) is the Bipartite nuclear localization signal element.

Zn(2+) serves as cofactor.

It is found in the nucleus. Functionally, trans-acting factor that binds specifically to the consensus nucleotide sequence 5'-TNCGTACAA-3'. The chain is Squamosa promoter-binding-like protein 10 (SPL10) from Arabidopsis thaliana (Mouse-ear cress).